Reading from the N-terminus, the 948-residue chain is Protocadherin alpha-2 (948 aa).

Residues 1 to 22 (MASSIRRGLGAWTRLLSLLLLA) form the signal peptide. Residues 23–697 (AWEVGSGQLR…GSEATLVDVN (675 aa)) lie on the Extracellular side of the membrane. 6 Cadherin domains span residues 30-133 (QLRY…PPVF), 157-242 (ASDA…EPTF), 243-350 (AQSV…TPEV), 351-455 (SITS…APAF), 456-565 (AQPE…APAL), and 588-678 (GHVV…APKA). 4 N-linked (GlcNAc...) asparagine glycosylation sites follow: asparagine 257, asparagine 265, asparagine 362, and asparagine 548. Residues 698–718 (VYLIIAICAVSSLLVLTVLLY) traverse the membrane as a helical segment. The Cytoplasmic portion of the chain corresponds to 719-948 (TALRCSVPAT…GNSTTDNSDQ (230 aa)). A PXXP 1 repeat occupies 734 to 737 (PGKP). Residues 734-892 (PGKPTLVCSS…PDKFIIPGSP (159 aa)) are 5 X 4 AA repeats of P-X-X-P. Disordered stretches follow at residues 755–801 (RQRV…RQPN), 829–854 (GPGG…EVSP), and 868–948 (KYGP…NSDQ). Basic and acidic residues predominate over residues 783 to 795 (AEEKQLSESEYVG). PXXP repeat units follow at residues 797–800 (PRQP), 830–833 (PGGP), 871–874 (PGNP), and 889–892 (PGSP). Basic and acidic residues predominate over residues 907-921 (DKSDFITFGKKEETK).

The protein resides in the cell membrane. Functionally, potential calcium-dependent cell-adhesion protein. May be involved in the establishment and maintenance of specific neuronal connections in the brain. The protein is Protocadherin alpha-2 (PCDHA2) of Pan troglodytes (Chimpanzee).